The following is a 106-amino-acid chain: Urease subunit beta (106 aa).

The protein belongs to the urease beta subunit family. Heterotrimer of UreA (gamma), UreB (beta) and UreC (alpha) subunits. Three heterotrimers associate to form the active enzyme.

The protein resides in the cytoplasm. The catalysed reaction is urea + 2 H2O + H(+) = hydrogencarbonate + 2 NH4(+). Its pathway is nitrogen metabolism; urea degradation; CO(2) and NH(3) from urea (urease route): step 1/1. The sequence is that of Urease subunit beta from Prochlorococcus marinus (strain NATL1A).